The sequence spans 610 residues: Elongation factor 4 (610 aa).

In terms of domain architecture, tr-type G spans 11–193; it reads EKIRNFSIIA…QIVEKVPAPT (183 aa). Residues 23–28 and 140–143 each bind GTP; these read DHGKST and NKID.

It belongs to the TRAFAC class translation factor GTPase superfamily. Classic translation factor GTPase family. LepA subfamily.

It localises to the cell membrane. The enzyme catalyses GTP + H2O = GDP + phosphate + H(+). Functionally, required for accurate and efficient protein synthesis under certain stress conditions. May act as a fidelity factor of the translation reaction, by catalyzing a one-codon backward translocation of tRNAs on improperly translocated ribosomes. Back-translocation proceeds from a post-translocation (POST) complex to a pre-translocation (PRE) complex, thus giving elongation factor G a second chance to translocate the tRNAs correctly. Binds to ribosomes in a GTP-dependent manner. This Streptococcus pyogenes serotype M12 (strain MGAS9429) protein is Elongation factor 4.